The chain runs to 331 residues: Neurogenic differentiation factor 4 (331 aa).

Residues Met-1–Ala-80 are disordered. Residues Asp-52–Gly-64 show a composition bias toward acidic residues. A compositionally biased stretch (basic residues) spans Pro-67 to Lys-79. Residues Ala-87–Leu-139 form the bHLH domain. The segment at Thr-246–Leu-265 is disordered.

As to quaternary structure, efficient DNA binding requires dimerization with another bHLH protein. In terms of processing, serine or threonine phosphorylation within the basic region may regulate neurogenic activity.

The protein resides in the nucleus. Functionally, probably acts as a transcriptional activator. Mediates neuronal differentiation. Required for the regulation of amacrine cell fate specification in the retina. The protein is Neurogenic differentiation factor 4 (NEUROD4) of Homo sapiens (Human).